The following is a 2376-amino-acid chain: Protein Ycf2 (2376 aa).

Disordered regions lie at residues 173 to 194 (SSQL…GTED), 226 to 256 (TEIE…EMNN), and 952 to 1011 (KRKK…KRKE). Residues 235-245 (KGLSGSSSKSR) show a composition bias toward low complexity. Basic and acidic residues-rich tracts occupy residues 246 to 255 (LFTEGEKEMN) and 960 to 1009 (KRKE…PEKR). An ATP-binding site is contributed by 1441–1448 (GSIGSGRS). Disordered regions lie at residues 1515 to 1534 (YEDR…DYEP), 1860 to 2046 (LVGS…LRPK), and 2112 to 2230 (PAEE…DGFS). Over residues 1866–2025 (TEEEVEGTEE…GEGTEDEEGE (160 aa)) the composition is skewed to acidic residues. Residues 2026–2038 (GTEKDSSQFDNDR) are compositionally biased toward basic and acidic residues. 2 stretches are compositionally biased toward acidic residues: residues 2112–2129 (PAEE…EALE) and 2136–2213 (GEEE…ENDS).

It belongs to the Ycf2 family.

The protein localises to the plastid. Its subcellular location is the chloroplast stroma. Functionally, probable ATPase of unknown function. Its presence in a non-photosynthetic plant (Epifagus virginiana) and experiments in tobacco indicate that it has an essential function which is probably not related to photosynthesis. This is Protein Ycf2 from Oenothera glazioviana (Large-flowered evening primrose).